The following is a 392-amino-acid chain: Formate-dependent phosphoribosylglycinamide formyltransferase (392 aa).

N(1)-(5-phospho-beta-D-ribosyl)glycinamide-binding positions include 20–21 (EL) and Glu-80. ATP contacts are provided by residues Arg-112, Lys-153, 158–163 (SSGKGQ), 193–196 (EGFI), and Glu-201. One can recognise an ATP-grasp domain in the interval 117 to 306 (RLAAETLALP…EFALHVRAIL (190 aa)). Glu-265 and Glu-277 together coordinate Mg(2+). N(1)-(5-phospho-beta-D-ribosyl)glycinamide is bound by residues Asp-284, Lys-354, and 361-362 (RR).

Belongs to the PurK/PurT family. Homodimer.

It carries out the reaction N(1)-(5-phospho-beta-D-ribosyl)glycinamide + formate + ATP = N(2)-formyl-N(1)-(5-phospho-beta-D-ribosyl)glycinamide + ADP + phosphate + H(+). Its pathway is purine metabolism; IMP biosynthesis via de novo pathway; N(2)-formyl-N(1)-(5-phospho-D-ribosyl)glycinamide from N(1)-(5-phospho-D-ribosyl)glycinamide (formate route): step 1/1. Involved in the de novo purine biosynthesis. Catalyzes the transfer of formate to 5-phospho-ribosyl-glycinamide (GAR), producing 5-phospho-ribosyl-N-formylglycinamide (FGAR). Formate is provided by PurU via hydrolysis of 10-formyl-tetrahydrofolate. In Shewanella amazonensis (strain ATCC BAA-1098 / SB2B), this protein is Formate-dependent phosphoribosylglycinamide formyltransferase.